Consider the following 483-residue polypeptide: Macrophage receptor MARCO (483 aa).

Over Met1 to Phe48 the chain is Cytoplasmic. A helical; Signal-anchor for type II membrane protein transmembrane segment spans residues Cys49–Leu69. At Lys70–Arg483 the chain is on the extracellular side. N-linked (GlcNAc...) asparagine glycans are attached at residues Asn85 and Asn137. The segment at Arg146–Phe386 is disordered. The region spanning Lys148–Gly383 is the Collagen-like domain. Positions Ser153–Lys166 are enriched in low complexity. Over residues Lys193–Asp216 the composition is skewed to basic and acidic residues. Residues Val273–Lys286 show a composition bias toward low complexity. The segment covering Lys376 to Phe386 has biased composition (basic and acidic residues). The region spanning Val389–Arg483 is the SRCR domain. 3 disulfide bridges follow: Cys412-Cys472, Cys425-Cys482, and Cys452-Cys462.

Homotrimer; disulfide-linked. Trimers may assemble in larger oligomers thus resulting in the creation of a large surface capable of interacting with very large ligands. N-glycosylated. Expressed in alveolar macrophages, macrophages of lymph node sinues, and Kupffer cells in liver (at protein level).

The protein localises to the cell membrane. Functionally, pattern recognition receptor (PRR) which binds Gram-positive and Gram-negative bacteria. Also plays a role in binding of unopsonized particles by alveolar macrophages. Binds to the secretoglobin SCGB3A2. The chain is Macrophage receptor MARCO (MARCO) from Mesocricetus auratus (Golden hamster).